Consider the following 639-residue polypeptide: ATP-dependent zinc metalloprotease FtsH (639 aa).

Residues 1–15 (MDNEKQASPPPAAPP) are Cytoplasmic-facing. A helical transmembrane segment spans residues 16 to 36 (LNWRYLLWIILLGIFLISWLG). Topologically, residues 37 to 123 (NAGRQAGDEI…VQAKSEEPSL (87 aa)) are periplasmic. Residues 124-144 (WMQAIIGILPWFLILGLIFYV) form a helical membrane-spanning segment. Over 145–639 (SYRMQQRMMG…HNEAVATGAG (495 aa)) the chain is Cytoplasmic. 221–228 (GRPGTGKT) serves as a coordination point for ATP. H442 is a binding site for Zn(2+). E443 is a catalytic residue. Positions 446 and 518 each coordinate Zn(2+).

It in the central section; belongs to the AAA ATPase family. In the C-terminal section; belongs to the peptidase M41 family. In terms of assembly, homohexamer. Zn(2+) serves as cofactor.

It localises to the cell inner membrane. Functionally, acts as a processive, ATP-dependent zinc metallopeptidase for both cytoplasmic and membrane proteins. Plays a role in the quality control of integral membrane proteins. The sequence is that of ATP-dependent zinc metalloprotease FtsH from Nitrosococcus oceani (strain ATCC 19707 / BCRC 17464 / JCM 30415 / NCIMB 11848 / C-107).